Consider the following 478-residue polypeptide: CDK5 and ABL1 enzyme substrate 2 (478 aa).

Residues 1–121 (MAAAAAGGAP…GLGLDGQRQR (121 aa)) are disordered. Residues 11–24 (GPAPGPAGPPPPAA) are compositionally biased toward pro residues. Over residues 25 to 35 (PTSAARAPPQA) the composition is skewed to low complexity. The segment covering 36 to 46 (LRRRGDSRRRQ) has biased composition (basic residues). Pro residues predominate over residues 69 to 92 (EKPPPPPAEAREPPAPPPPEPPTG). Residues Ser-130 and Ser-208 each carry the phosphoserine modification. The tract at residues 257-296 (SDSHGLLPTPRPSVPRTLPGSRHKPAPTKSAPASTELGSD) is disordered.

This sequence belongs to the cyclin family. Binds to CDK3, CDK5 and ABL1. The C-terminal cyclin-box-like region binds to CDK5.

In terms of biological role, unknown. Probably involved in G1-S cell cycle transition. This Homo sapiens (Human) protein is CDK5 and ABL1 enzyme substrate 2 (CABLES2).